The chain runs to 73 residues: Large ribosomal subunit protein bL31 (73 aa).

Belongs to the bacterial ribosomal protein bL31 family. Type A subfamily. As to quaternary structure, part of the 50S ribosomal subunit.

Its function is as follows. Binds the 23S rRNA. The chain is Large ribosomal subunit protein bL31 (rpmE) from Ruegeria pomeroyi (strain ATCC 700808 / DSM 15171 / DSS-3) (Silicibacter pomeroyi).